The sequence spans 65 residues: UPF0434 protein BH12860 (65 aa).

This sequence belongs to the UPF0434 family.

The sequence is that of UPF0434 protein BH12860 from Bartonella henselae (strain ATCC 49882 / DSM 28221 / CCUG 30454 / Houston 1) (Rochalimaea henselae).